A 292-amino-acid polypeptide reads, in one-letter code: Acetylglutamate kinase (292 aa).

Substrate is bound by residues 60–61 (GG), Arg82, and Asn187.

The protein belongs to the acetylglutamate kinase family. ArgB subfamily.

The protein resides in the cytoplasm. It catalyses the reaction N-acetyl-L-glutamate + ATP = N-acetyl-L-glutamyl 5-phosphate + ADP. The protein operates within amino-acid biosynthesis; L-arginine biosynthesis; N(2)-acetyl-L-ornithine from L-glutamate: step 2/4. In terms of biological role, catalyzes the ATP-dependent phosphorylation of N-acetyl-L-glutamate. The polypeptide is Acetylglutamate kinase (Methanobrevibacter smithii (strain ATCC 35061 / DSM 861 / OCM 144 / PS)).